The sequence spans 586 residues: MEPAAALHFSRPASLLLLLSLCALVSAQVTVVGPTDPILAMVGENTTLRCCLSPEENAEDMEVRWFQSQFSPAVFVYKGGRERTEEQKEEYRGRTTFVSKDSRGSVALIIHNVTAEDNGIYQCYFQEGRSCNEAILHLVVAGLDSEPVIEMRDHEDGGIQLECISGGWYPKPLTVWRDPYGEVVPALKEVSTPDADSLFMVTTAVIIRDKSVRNVSCSINDTLLGQKKESVIFIPESFMPSRSPCVVILPVIMIILMIPIAICIYWINNLQKEKKDSHLMTFNLCLSLAGWRRTFLHAANVVLDQDTGHPYLFVSEDKRSVTLDPSRESIPGNPERFDSQLCVLGQESFASGKHYLEVDVENVIEWTVGICRDNVERKWEVPLLPQNGFWTLEMHKRKYWALTSLKWILSLEEPLCQVGIFLDYEAGDVSFYNMRDRSHIYTFPHSAFSVPVRPFFSLGSYDSQILICSAFTGASGVTVPEEGWTLHRAGTHHSPQNQFPSLTAMETSPGHLSSHCTMPLVEDTPSSPLVTQENIFQLPLSHPLQTSAPVHLLIRCGFSSSFGCNYGMESRHRELVVPQLPARKKV.

The signal sequence occupies residues 1-27; sequence MEPAAALHFSRPASLLLLLSLCALVSA. The 112-residue stretch at 28–139 folds into the Ig-like V-type domain; it reads QVTVVGPTDP…SCNEAILHLV (112 aa). Residues 28–246 lie on the Extracellular side of the membrane; it reads QVTVVGPTDP…SFMPSRSPCV (219 aa). Residues N45, N112, N214, and N220 are each glycosylated (N-linked (GlcNAc...) asparagine). C50 and C123 are joined by a disulfide. Residues 247–267 traverse the membrane as a helical segment; it reads VILPVIMIILMIPIAICIYWI. Residues 268-586 lie on the Cytoplasmic side of the membrane; that stretch reads NNLQKEKKDS…VPQLPARKKV (319 aa). The region spanning 281-474 is the B30.2/SPRY domain; it reads TFNLCLSLAG…ILICSAFTGA (194 aa).

This sequence belongs to the immunoglobulin superfamily. BTN/MOG family.

The protein resides in the membrane. This chain is Putative butyrophilin subfamily 2 member A3 (BTN2A3P), found in Homo sapiens (Human).